Here is a 461-residue protein sequence, read N- to C-terminus: Putative transcription initiation factor IIB-like protein (461 aa).

The segment at 113 to 142 (SESLENIQSENSENNDNFTDNNTKKSPTKS) is disordered. The span at 121 to 137 (SENSENNDNFTDNNTKK) shows a compositional bias: low complexity. A TFIIB-type zinc finger spans residues 141–173 (KSRICSGCGSKGTLLEDQSSSVLVCSECGMIND). Cys-145, Cys-165, and Cys-168 together coordinate Zn(2+). 2 repeat units span residues 246-327 (ISTI…EKKV) and 360-430 (IRRH…DVTI).

It belongs to the TFIIB family.

The polypeptide is Putative transcription initiation factor IIB-like protein (Acanthamoeba polyphaga mimivirus (APMV)).